A 205-amino-acid chain; its full sequence is Beta-crystallin B2 (205 aa).

An N-acetylalanine modification is found at alanine 2. The segment at 2–16 (ASDHQTQAGKPQPLN) is N-terminal arm. Beta/gamma crystallin 'Greek key' domains follow at residues 17–56 (PKIIIFEQENFQGHSHELSGPCPNLKETGMEKAGSVLVQA) and 57–101 (GPWV…RPIK). The connecting peptide stretch occupies residues 102–106 (VDSQE). Beta/gamma crystallin 'Greek key' domains follow at residues 107–148 (HKII…RVQS) and 149–191 (GTWV…RRIR). Residues 193–205 (MQWHQRGAFHPSS) are C-terminal arm.

Belongs to the beta/gamma-crystallin family. In terms of assembly, homo/heterodimer, or complexes of higher-order. The structure of beta-crystallin oligomers seems to be stabilized through interactions between the N-terminal arms.

Its function is as follows. Crystallins are the dominant structural components of the vertebrate eye lens. The protein is Beta-crystallin B2 (CRYBB2) of Mesocricetus auratus (Golden hamster).